The chain runs to 197 residues: FMN-dependent NADH:quinone oxidoreductase (197 aa).

Residue Ser-10 coordinates FMN.

The protein belongs to the azoreductase type 1 family. As to quaternary structure, homodimer. It depends on FMN as a cofactor.

It catalyses the reaction 2 a quinone + NADH + H(+) = 2 a 1,4-benzosemiquinone + NAD(+). It carries out the reaction N,N-dimethyl-1,4-phenylenediamine + anthranilate + 2 NAD(+) = 2-(4-dimethylaminophenyl)diazenylbenzoate + 2 NADH + 2 H(+). Quinone reductase that provides resistance to thiol-specific stress caused by electrophilic quinones. Its function is as follows. Also exhibits azoreductase activity. Catalyzes the reductive cleavage of the azo bond in aromatic azo compounds to the corresponding amines. In Mycoplasma pneumoniae (strain ATCC 29342 / M129 / Subtype 1) (Mycoplasmoides pneumoniae), this protein is FMN-dependent NADH:quinone oxidoreductase.